A 597-amino-acid polypeptide reads, in one-letter code: Elongation factor 4 (597 aa).

The tr-type G domain maps to 2–184 (DHIRNFSIIA…ALIAKVPPPK (183 aa)). GTP is bound by residues 14–19 (DHGKST) and 131–134 (NKID).

The protein belongs to the TRAFAC class translation factor GTPase superfamily. Classic translation factor GTPase family. LepA subfamily.

Its subcellular location is the cell inner membrane. The enzyme catalyses GTP + H2O = GDP + phosphate + H(+). Required for accurate and efficient protein synthesis under certain stress conditions. May act as a fidelity factor of the translation reaction, by catalyzing a one-codon backward translocation of tRNAs on improperly translocated ribosomes. Back-translocation proceeds from a post-translocation (POST) complex to a pre-translocation (PRE) complex, thus giving elongation factor G a second chance to translocate the tRNAs correctly. Binds to ribosomes in a GTP-dependent manner. This is Elongation factor 4 from Cupriavidus taiwanensis (strain DSM 17343 / BCRC 17206 / CCUG 44338 / CIP 107171 / LMG 19424 / R1) (Ralstonia taiwanensis (strain LMG 19424)).